The sequence spans 151 residues: Ribosomal RNA large subunit methyltransferase H (151 aa).

S-adenosyl-L-methionine contacts are provided by residues L73, G100, and 119–124 (LSDLTM).

Belongs to the RNA methyltransferase RlmH family. As to quaternary structure, homodimer.

The protein resides in the cytoplasm. It carries out the reaction pseudouridine(1915) in 23S rRNA + S-adenosyl-L-methionine = N(3)-methylpseudouridine(1915) in 23S rRNA + S-adenosyl-L-homocysteine + H(+). Functionally, specifically methylates the pseudouridine at position 1915 (m3Psi1915) in 23S rRNA. This is Ribosomal RNA large subunit methyltransferase H from Aliarcobacter butzleri (strain RM4018) (Arcobacter butzleri).